A 260-amino-acid chain; its full sequence is Type III pantothenate kinase (260 aa).

6–13 (DSGNTNIV) lines the ATP pocket. 108–111 (GADR) lines the substrate pocket. Asp-110 functions as the Proton acceptor in the catalytic mechanism. Residue Asp-130 coordinates K(+). Residue Thr-133 participates in ATP binding. Thr-185 contacts substrate.

This sequence belongs to the type III pantothenate kinase family. As to quaternary structure, homodimer. NH4(+) is required as a cofactor. It depends on K(+) as a cofactor.

The protein resides in the cytoplasm. The catalysed reaction is (R)-pantothenate + ATP = (R)-4'-phosphopantothenate + ADP + H(+). It functions in the pathway cofactor biosynthesis; coenzyme A biosynthesis; CoA from (R)-pantothenate: step 1/5. Functionally, catalyzes the phosphorylation of pantothenate (Pan), the first step in CoA biosynthesis. The sequence is that of Type III pantothenate kinase from Paramagnetospirillum magneticum (strain ATCC 700264 / AMB-1) (Magnetospirillum magneticum).